Here is a 376-residue protein sequence, read N- to C-terminus: uncharacterized protein (376 aa).

Belongs to the choline/ethanolamine kinase family.

This is an uncharacterized protein from Caenorhabditis elegans.